We begin with the raw amino-acid sequence, 473 residues long: Poly(A) polymerase catalytic subunit (473 aa).

Residues Asp-193 and Asp-195 contribute to the active site.

This sequence belongs to the poxviridae poly(A) polymerase catalytic subunit family. Heterodimer of a large (catalytic) subunit and a small (regulatory) subunit.

It carries out the reaction RNA(n) + ATP = RNA(n)-3'-adenine ribonucleotide + diphosphate. Its function is as follows. Polymerase that creates the 3'-poly(A) tail of mRNA's. The protein is Poly(A) polymerase catalytic subunit (PAPL) of Crocodylus johnstoni (Australian freshwater crocodile).